The following is a 1067-amino-acid chain: Protein bric-a-brac 2 (1067 aa).

Residues 30 to 121 (MAPPEEPKMV…PPRPLTSSEV (92 aa)) are disordered. Composition is skewed to basic and acidic residues over residues 47 to 62 (HLED…REVE) and 86 to 98 (KSPE…ELVK). Y55 carries the phosphotyrosine modification. Residues S56, S87, and S147 each carry the phosphoserine modification. The BTB domain occupies 223-288 (VDVTLSCEGH…MYKGEINVCQ (66 aa)). Disordered regions lie at residues 312 to 412 (GRGE…QSQP), 444 to 505 (ANQR…AAQH), and 525 to 563 (GAAG…SHHD). Residues 326–335 (FDDEDEEEEL) are compositionally biased toward acidic residues. The residue at position 377 (S377) is a Phosphoserine. T384 carries the phosphothreonine modification. Residues 391–412 (GGESEISERGSSGTPGQSQSQP) are compositionally biased toward low complexity. 2 stretches are compositionally biased toward gly residues: residues 525–538 (GAAG…GSGS) and 545–556 (GGTGVAGSGAGA). Residues 635–687 (FRERGPLKSWRPEAMAEAIFSVLKEGLSLSQAARKFDIPYPTFVLYANRVHNM) enclose the HTH psq-type domain. The segment at residues 645-690 (RPEAMAEAIFSVLKEGLSLSQAARKFDIPYPTFVLYANRVHNMLGP) is a DNA-binding region (H-T-H motif). The segment at residues 697 to 708 (DPRPKARGRPQR) is a DNA-binding region (a.T hook). 3 disordered regions span residues 796–829 (QILS…PHAQ), 860–879 (AKHQ…PDLS), and 891–967 (VMPS…PYSA). The segment covering 812-829 (AHHQQQPSHHQQQSPHAQ) has biased composition (low complexity). Residues 904-914 (AAPNSAASYAR) show a composition bias toward low complexity. The segment covering 915-933 (ELSRERERDRERERERELS) has biased composition (basic and acidic residues). Low complexity predominate over residues 934-949 (RQYGSQSRGSSSGSGS).

As to expression, leg imaginal disk at the central region of the tarsus and in eye antenna disk at the basal cylinder.

It is found in the nucleus. Probably acts as a transcriptional regulator. Required for the specification of the tarsal segment. Also involved in antenna development. The polypeptide is Protein bric-a-brac 2 (bab2) (Drosophila melanogaster (Fruit fly)).